A 555-amino-acid chain; its full sequence is Hydroxylamine reductase (555 aa).

Positions 5, 8, 17, and 23 each coordinate [4Fe-4S] cluster. Hybrid [4Fe-2O-2S] cluster is bound by residues His248, Glu272, Cys316, Cys408, Cys436, Cys461, Glu496, and Lys498. Residue Cys408 is modified to Cysteine persulfide.

This sequence belongs to the HCP family. Requires [4Fe-4S] cluster as cofactor. Hybrid [4Fe-2O-2S] cluster is required as a cofactor.

The protein localises to the cytoplasm. It catalyses the reaction A + NH4(+) + H2O = hydroxylamine + AH2 + H(+). Its function is as follows. Catalyzes the reduction of hydroxylamine to form NH(3) and H(2)O. This is Hydroxylamine reductase from Natranaerobius thermophilus (strain ATCC BAA-1301 / DSM 18059 / JW/NM-WN-LF).